Here is a 179-residue protein sequence, read N- to C-terminus: MDCLRKQAEKIPILDAIEKRMNIRKEYALLGISFFCLVIIMATSLGPLITSTVGIIVPLQETLVILRQVNPKKDEAKHMLVFWMVFGILTSLDAYSGAIISFIPLWYTMKFFFLLWAGPLKFRGGIIIYDNILARIPEKWYREEGGIEHAVKKATDAVKTVAESEFNKKDVIESSKKTD.

3 helical membrane passes run Leu29 to Ile49, Ala76 to Ser96, and Gly97 to Ala117.

Belongs to the DP1 family.

The protein resides in the membrane. This is an uncharacterized protein from Encephalitozoon cuniculi (strain GB-M1) (Microsporidian parasite).